We begin with the raw amino-acid sequence, 224 residues long: Ribonuclease T (224 aa).

Residues 1-11 (MSEDLYEDDQD) show a composition bias toward acidic residues. Residues 1–20 (MSEDLYEDDQDSQVSSGSRH) form a disordered region. The region spanning 32-206 (VVVDVETGGF…YDTEKTAELF (175 aa)) is the Exonuclease domain. The Mg(2+) site is built by Asp35, Glu37, His193, and Asp198. Residue His193 is the Proton donor/acceptor of the active site.

The protein belongs to the RNase T family. In terms of assembly, homodimer. Requires Mg(2+) as cofactor.

Trims short 3' overhangs of a variety of RNA species, leaving a one or two nucleotide 3' overhang. Responsible for the end-turnover of tRNA: specifically removes the terminal AMP residue from uncharged tRNA (tRNA-C-C-A). Also appears to be involved in tRNA biosynthesis. This Pseudomonas entomophila (strain L48) protein is Ribonuclease T.